We begin with the raw amino-acid sequence, 260 residues long: Adenosylcobinamide-GDP ribazoletransferase (260 aa).

The next 7 membrane-spanning stretches (helical) occupy residues 31 to 51, 57 to 77, 108 to 128, 131 to 151, 173 to 193, 206 to 226, and 240 to 260; these read FYFL…PIYF, IEIS…SIHL, YGTI…STII, AGLL…VVVF, FFFW…IAAF, LKYL…IRIS, and LIVE…NVHL.

It belongs to the CobS family. The cofactor is Mg(2+).

The protein localises to the cell inner membrane. It carries out the reaction alpha-ribazole + adenosylcob(III)inamide-GDP = adenosylcob(III)alamin + GMP + H(+). The enzyme catalyses alpha-ribazole 5'-phosphate + adenosylcob(III)inamide-GDP = adenosylcob(III)alamin 5'-phosphate + GMP + H(+). The protein operates within cofactor biosynthesis; adenosylcobalamin biosynthesis; adenosylcobalamin from cob(II)yrinate a,c-diamide: step 7/7. In terms of biological role, joins adenosylcobinamide-GDP and alpha-ribazole to generate adenosylcobalamin (Ado-cobalamin). Also synthesizes adenosylcobalamin 5'-phosphate from adenosylcobinamide-GDP and alpha-ribazole 5'-phosphate. The sequence is that of Adenosylcobinamide-GDP ribazoletransferase from Treponema denticola (strain ATCC 35405 / DSM 14222 / CIP 103919 / JCM 8153 / KCTC 15104).